A 324-amino-acid polypeptide reads, in one-letter code: Cyclin-dependent kinase C-3 (324 aa).

One can recognise a Protein kinase domain in the interval 27-320 (FRRIRKIGEG…AHDALCAAYF (294 aa)). Residues 33 to 41 (IGEGTYGEV) and lysine 56 each bind ATP. Threonine 37 carries the post-translational modification Phosphothreonine. A Phosphotyrosine modification is found at tyrosine 38. Residue aspartate 160 is the Proton acceptor of the active site. Threonine 193 carries the post-translational modification Phosphothreonine.

This sequence belongs to the protein kinase superfamily. CMGC Ser/Thr protein kinase family. CDC2/CDKX subfamily.

The catalysed reaction is L-seryl-[protein] + ATP = O-phospho-L-seryl-[protein] + ADP + H(+). The enzyme catalyses L-threonyl-[protein] + ATP = O-phospho-L-threonyl-[protein] + ADP + H(+). It carries out the reaction [DNA-directed RNA polymerase] + ATP = phospho-[DNA-directed RNA polymerase] + ADP + H(+). The sequence is that of Cyclin-dependent kinase C-3 (CDKC-1) from Oryza sativa subsp. japonica (Rice).